The sequence spans 303 residues: Aspartate carbamoyltransferase catalytic subunit (303 aa).

Positions 54 and 55 each coordinate carbamoyl phosphate. Lysine 83 is an L-aspartate binding site. Residues arginine 104, histidine 132, and glutamine 135 each contribute to the carbamoyl phosphate site. L-aspartate contacts are provided by arginine 164 and arginine 226. 2 residues coordinate carbamoyl phosphate: leucine 265 and proline 266.

This sequence belongs to the aspartate/ornithine carbamoyltransferase superfamily. ATCase family. Heterooligomer of catalytic and regulatory chains.

The enzyme catalyses carbamoyl phosphate + L-aspartate = N-carbamoyl-L-aspartate + phosphate + H(+). The protein operates within pyrimidine metabolism; UMP biosynthesis via de novo pathway; (S)-dihydroorotate from bicarbonate: step 2/3. Catalyzes the condensation of carbamoyl phosphate and aspartate to form carbamoyl aspartate and inorganic phosphate, the committed step in the de novo pyrimidine nucleotide biosynthesis pathway. This Methanocorpusculum labreanum (strain ATCC 43576 / DSM 4855 / Z) protein is Aspartate carbamoyltransferase catalytic subunit.